The following is a 239-amino-acid chain: Orotidine 5'-phosphate decarboxylase (239 aa).

Substrate-binding positions include D15, K37, 64 to 73 (DLKFHDIPNT), T126, R187, Q196, G216, and R217. The active-site Proton donor is the K66.

It belongs to the OMP decarboxylase family. Type 1 subfamily. As to quaternary structure, homodimer.

The enzyme catalyses orotidine 5'-phosphate + H(+) = UMP + CO2. It functions in the pathway pyrimidine metabolism; UMP biosynthesis via de novo pathway; UMP from orotate: step 2/2. In terms of biological role, catalyzes the decarboxylation of orotidine 5'-monophosphate (OMP) to uridine 5'-monophosphate (UMP). In Geobacter metallireducens (strain ATCC 53774 / DSM 7210 / GS-15), this protein is Orotidine 5'-phosphate decarboxylase.